The sequence spans 146 residues: Hemoglobin subunit beta (146 aa).

Val-1 carries the post-translational modification N-acetylvaline. Residues 2-146 enclose the Globin domain; that stretch reads HLSGEEKAAV…VANALAHKYH (145 aa). At Thr-12 the chain carries Phosphothreonine. Residue Ser-44 is modified to Phosphoserine. Lys-59 is subject to N6-acetyllysine. His-63 contacts heme b. Position 82 is an N6-acetyllysine (Lys-82). Position 92 (His-92) interacts with heme b. Residue Cys-93 is modified to S-nitrosocysteine. The residue at position 144 (Lys-144) is an N6-acetyllysine.

The protein belongs to the globin family. In terms of assembly, heterotetramer of two alpha chains and two beta chains. Red blood cells.

Its function is as follows. Involved in oxygen transport from the lung to the various peripheral tissues. This Tupaia glis (Common tree shrew) protein is Hemoglobin subunit beta (HBB).